We begin with the raw amino-acid sequence, 342 residues long: D-erythrose-4-phosphate dehydrogenase (342 aa).

Position 12–13 (12–13 (RI)) interacts with NAD(+). Substrate-binding positions include 154–156 (SCT), Arg200, 213–214 (TK), and Arg236. Cys155 functions as the Nucleophile in the catalytic mechanism. Asn318 provides a ligand contact to NAD(+).

Belongs to the glyceraldehyde-3-phosphate dehydrogenase family. Epd subfamily. In terms of assembly, homotetramer.

Its subcellular location is the cytoplasm. It carries out the reaction D-erythrose 4-phosphate + NAD(+) + H2O = 4-phospho-D-erythronate + NADH + 2 H(+). It functions in the pathway cofactor biosynthesis; pyridoxine 5'-phosphate biosynthesis; pyridoxine 5'-phosphate from D-erythrose 4-phosphate: step 1/5. Functionally, catalyzes the NAD-dependent conversion of D-erythrose 4-phosphate to 4-phosphoerythronate. This is D-erythrose-4-phosphate dehydrogenase from Salmonella arizonae (strain ATCC BAA-731 / CDC346-86 / RSK2980).